Here is a 166-residue protein sequence, read N- to C-terminus: Ribosome maturation factor RimM (166 aa).

A PRC barrel domain is found at 94 to 166; that stretch reads EDEFYITDLN…AILNYKRDEL (73 aa).

The protein belongs to the RimM family. Binds ribosomal protein uS19.

The protein localises to the cytoplasm. In terms of biological role, an accessory protein needed during the final step in the assembly of 30S ribosomal subunit, possibly for assembly of the head region. Essential for efficient processing of 16S rRNA. May be needed both before and after RbfA during the maturation of 16S rRNA. It has affinity for free ribosomal 30S subunits but not for 70S ribosomes. This is Ribosome maturation factor RimM from Rickettsia bellii (strain RML369-C).